We begin with the raw amino-acid sequence, 349 residues long: tRNA pseudouridine synthase D (349 aa).

Phenylalanine 27 lines the substrate pocket. Residue aspartate 80 is the Nucleophile of the active site. A substrate-binding site is contributed by asparagine 129. The 149-residue stretch at 155–303 folds into the TRUD domain; the sequence is GVPNYFGAQR…VEAARRAMLL (149 aa). Phenylalanine 329 provides a ligand contact to substrate.

Belongs to the pseudouridine synthase TruD family.

The catalysed reaction is uridine(13) in tRNA = pseudouridine(13) in tRNA. In terms of biological role, responsible for synthesis of pseudouridine from uracil-13 in transfer RNAs. This Klebsiella pneumoniae subsp. pneumoniae (strain ATCC 700721 / MGH 78578) protein is tRNA pseudouridine synthase D.